Reading from the N-terminus, the 201-residue chain is Akirin-2 (201 aa).

Residues Ser-18 and Ser-21 each carry the phosphoserine modification. Positions 23-28 match the Nuclear localization signal motif; it reads KRRRCA. At Ser-55 the chain carries Phosphoserine. Residues 198-201 carry the SYVS motif motif; the sequence is SYVS.

Belongs to the akirin family. In terms of assembly, homodimer. Interacts with IPO9; the interaction is direct. Associates with 20S and 26S proteasomes. Interacts with SMARCD1; promoting SWI/SNF complex recruitment. Interacts with NFKBIZ. Interacts with YWHAB. In terms of processing, polyubiquitinated. Polyubiquitination is dependent of UBR5 that extends pre-ubiquitinated AKIRIN2.

The protein resides in the nucleus. Its subcellular location is the cytoplasm. It is found in the membrane. Its function is as follows. Molecular adapter that acts as a bridge between a variety of multiprotein complexes, and which is involved in embryonic development, immunity, myogenesis and brain development. Plays a key role in nuclear protein degradation by promoting import of proteasomes into the nucleus: directly binds to fully assembled 20S proteasomes at one end and to nuclear import receptor IPO9 at the other end, bridging them together and mediating the import of pre-assembled proteasome complexes through the nuclear pore. Involved in innate immunity by regulating the production of interleukin-6 (IL6) downstream of Toll-like receptor (TLR): acts by bridging the NF-kappa-B inhibitor NFKBIZ and the SWI/SNF complex, leading to promote induction of IL6. Also involved in adaptive immunity by promoting B-cell activation. Involved in brain development: required for the survival and proliferation of cerebral cortical progenitor cells. Involved in myogenesis: required for skeletal muscle formation and skeletal development, possibly by regulating expression of muscle differentiation factors. Also plays a role in facilitating interdigital tissue regression during limb development. The sequence is that of Akirin-2 from Mus musculus (Mouse).